The sequence spans 299 residues: MEFKLQELNLTNQDTGPYGITVSDKGKVWITQHKANMISCINLDGKITEYPLPTPDAKVMCLTISSDGEVWFTENAANKIGRITKKGIIKEYTLPNPDSAPYGITEGPNGDIWFTEMNGNRIGRITDDGKIREYELPNKGSYPSFITLGSDNALWFTENQNNAIGRITESGDITEFKIPTPASGPVGITKGNDDALWFVEIIGNKIGRITPLGEITEFKIPTPNARPHAITAGAGIDLWFTEWGANKIGRLTSNNIIEEYPIQIKSGEPHGICFDGETIWFAMECDKIGKLTLIKDNME.

His-228 is a binding site for substrate. Glu-268 lines the Mg(2+) pocket. His-270 (proton acceptor) is an active-site residue. Position 284 (Glu-284) interacts with Mg(2+).

This sequence belongs to the Vgb family. In terms of assembly, monomer. Mg(2+) serves as cofactor.

Functionally, inactivates the type B streptogramin antibiotics by linearizing the lactone ring at the ester linkage, generating a free phenylglycine carboxylate and converting the threonyl moiety into 2-amino-butenoic acid. In Staphylococcus aureus, this protein is Virginiamycin B lyase (vgb).